A 397-amino-acid chain; its full sequence is DnaJ homolog subfamily A member 1 (397 aa).

One can recognise a J domain in the interval T6 to G68. K66 bears the N6-acetyllysine mark. Phosphoserine is present on S83. The segment at G121–K205 adopts a CR-type zinc-finger fold. Positions 134, 137, 150, 153, 177, 180, 193, and 196 each coordinate Zn(2+). CXXCXGXG motif repeat units follow at residues C134–G141, C150–G157, C177–G184, and C193–K200. S335 is modified (phosphoserine). The segment at V352–S397 is disordered. Residues E353–D365 show a composition bias toward acidic residues. Y381 is modified (phosphotyrosine). The residue at position 394 (C394) is a Cysteine methyl ester. C394 carries the S-farnesyl cysteine lipid modification. Residues Q395 to S397 constitute a propeptide, removed in mature form.

In terms of assembly, identified in a complex with HSPA1B and BAX. Interacts with RNF207.

It is found in the membrane. The protein resides in the cytoplasm. It localises to the microsome. The protein localises to the mitochondrion. Its subcellular location is the nucleus. It is found in the perinuclear region. Its function is as follows. Co-chaperone for HSPA8/Hsc70. Plays a role in protein transport into mitochondria via its role as co-chaperone. Stimulates ATP hydrolysis, but not the folding of unfolded proteins mediated by HSPA1A (in vitro). Promotes apoptosis in response to cellular stress mediated by exposure to anisomycin or UV. Functions as co-chaperone for HSPA1B and negatively regulates the translocation of BAX from the cytosol to mitochondria in response to cellular stress, thereby protecting cells against apoptosis. The chain is DnaJ homolog subfamily A member 1 (Dnaja1) from Mus musculus (Mouse).